The chain runs to 52 residues: Protein RepA (52 aa).

The H-T-H motif DNA-binding region spans 20–40 (KLEELAQKYGMTKSGLVNFLV).

Belongs to the transcriptional regulatory CopG/NikR family. In terms of assembly, homodimer.

Functionally, regulates the plasmid copy number. RepA binds to the repAB promoter thus controlling the synthesis of the plasmid replication initiator protein RepB. This Lactiplantibacillus plantarum (Lactobacillus plantarum) protein is Protein RepA (repA).